Here is a 429-residue protein sequence, read N- to C-terminus: Enolase (429 aa).

Gln162 provides a ligand contact to (2R)-2-phosphoglycerate. Glu204 serves as the catalytic Proton donor. Mg(2+) is bound by residues Asp241, Glu283, and Asp310. Lys335, Arg364, Ser365, and Lys386 together coordinate (2R)-2-phosphoglycerate. Lys335 functions as the Proton acceptor in the catalytic mechanism.

This sequence belongs to the enolase family. It depends on Mg(2+) as a cofactor.

It localises to the cytoplasm. It is found in the secreted. The protein resides in the cell surface. It carries out the reaction (2R)-2-phosphoglycerate = phosphoenolpyruvate + H2O. It functions in the pathway carbohydrate degradation; glycolysis; pyruvate from D-glyceraldehyde 3-phosphate: step 4/5. Functionally, catalyzes the reversible conversion of 2-phosphoglycerate (2-PG) into phosphoenolpyruvate (PEP). It is essential for the degradation of carbohydrates via glycolysis. The polypeptide is Enolase (Mycolicibacterium gilvum (strain PYR-GCK) (Mycobacterium gilvum (strain PYR-GCK))).